The following is a 281-amino-acid chain: Probable endonuclease 4 (281 aa).

9 residues coordinate Zn(2+): His69, His109, Glu145, Asp179, His182, His216, Asp229, His231, and Glu261.

Belongs to the AP endonuclease 2 family. Zn(2+) is required as a cofactor.

It carries out the reaction Endonucleolytic cleavage to 5'-phosphooligonucleotide end-products.. In terms of biological role, endonuclease IV plays a role in DNA repair. It cleaves phosphodiester bonds at apurinic or apyrimidinic (AP) sites, generating a 3'-hydroxyl group and a 5'-terminal sugar phosphate. This is Probable endonuclease 4 from Chlorobaculum tepidum (strain ATCC 49652 / DSM 12025 / NBRC 103806 / TLS) (Chlorobium tepidum).